Reading from the N-terminus, the 414-residue chain is Glyco-Gag protein (414 aa).

Residues 1 to 51 (MSGASSGTAIGAHLFGVSPECRVLIGDEGAGPSKSLSEVSFSVWYQSRAAR) are Cytoplasmic-facing. The chain crosses the membrane as a helical span at residues 52 to 72 (LVIFCLVASFLVPCLTFLIAE). The Extracellular portion of the chain corresponds to 73 to 414 (TVMGQTIATP…TNLAQVKQVV (342 aa)). The N-linked (GlcNAc...) asparagine; by host glycan is linked to Asn-134. The disordered stretch occupies residues 171–282 (VRPFLPPPKP…LREGPNNRPQ (112 aa)). Residues 174 to 193 (FLPPPKPPTPLPQPLSPQPS) show a composition bias toward pro residues. Over residues 194-206 (APLTSSLYPVLPK) the composition is skewed to low complexity. Residues 210-220 (PKPPVLPPDPS) are compositionally biased toward pro residues.

Post-translationally, glycosylated by host. Cleaved by host near the middle of the molecule, releasing the c-terminal half containing capsid and nucleoprotein domains op GAG.

The protein resides in the host cell membrane. Plays a role in viral particle release. Presumably acts by facilitating the fission of the virion bud at the cell surface. The polypeptide is Glyco-Gag protein (Felidae (cat family)).